We begin with the raw amino-acid sequence, 263 residues long: LIM and SH3 domain protein 1 (263 aa).

The residue at position 1 (Met-1) is an N-acetylmethionine. The LIM zinc-binding domain maps to 5–56 (CARCGKIVYPTEKVNCLDKYWHKACFHCETCKMTLNMKNYKGYEKKPYCNAH). N6-acetyllysine is present on Lys-42. Nebulin repeat units lie at residues 61–95 (SFTMVADTPENLRLKQQSELQSQVRYKEEFEKNKG) and 97–131 (GFSVVADTPELQRIKKTQDQISNIKYHEEFEKSRM). Residue Thr-68 is modified to Phosphothreonine. Position 75 is an N6-methyllysine (Lys-75). Ser-99 is subject to Phosphoserine. A Phosphothreonine modification is found at Thr-104. N6-succinyllysine is present on Lys-112. A phosphoserine mark is found at Ser-118 and Ser-134. Residues 123 to 207 (HEEFEKSRMG…QRSAPGGGGK (85 aa)) form a disordered region. The span at 148–162 (DSSSYRRPTEQQQPQ) shows a compositional bias: polar residues. Thr-156 is subject to Phosphothreonine; by PKA. In terms of domain architecture, SH3 spans 204-263 (GGGKRYRAVYDYSAADEDEVSFQDGDTIVNVQQIDDGWMYGTVERTGDTGMLPANYVEAI).

In terms of assembly, interacts with F-actin. Interacts with KBTBD10. Interacts with ANKRD54.

It localises to the cytoplasm. Its subcellular location is the cell cortex. The protein localises to the cytoskeleton. Functionally, plays an important role in the regulation of dynamic actin-based, cytoskeletal activities. Agonist-dependent changes in LASP1 phosphorylation may also serve to regulate actin-associated ion transport activities, not only in the parietal cell but also in certain other F-actin-rich secretory epithelial cell types. The protein is LIM and SH3 domain protein 1 (Lasp1) of Mus musculus (Mouse).